A 647-amino-acid chain; its full sequence is DNA mismatch repair protein MutL (647 aa).

Belongs to the DNA mismatch repair MutL/HexB family.

Its function is as follows. This protein is involved in the repair of mismatches in DNA. It is required for dam-dependent methyl-directed DNA mismatch repair. May act as a 'molecular matchmaker', a protein that promotes the formation of a stable complex between two or more DNA-binding proteins in an ATP-dependent manner without itself being part of a final effector complex. The chain is DNA mismatch repair protein MutL from Koribacter versatilis (strain Ellin345).